The chain runs to 59 residues: Single-pass membrane and coiled-coil domain-containing protein 4 (59 aa).

Residues 1 to 23 form a disordered region; that stretch reads MRQLKGKPKKETSKDKKERKQAM. The segment covering 9–22 has biased composition (basic and acidic residues); that stretch reads KKETSKDKKERKQA. The stretch at 9–31 forms a coiled coil; that stretch reads KKETSKDKKERKQAMQEARQQIT. A helical membrane pass occupies residues 32 to 52; that stretch reads TVVLPTLAVVVLLIVVFVYVA.

It belongs to the SMCO4 family.

Its subcellular location is the membrane. In Mus musculus (Mouse), this protein is Single-pass membrane and coiled-coil domain-containing protein 4 (Smco4).